The sequence spans 116 residues: Cystatin (116 aa).

The Secondary area of contact signature appears at 53 to 57 (QLVSG). 2 disulfides stabilise this stretch: C71–C81 and C95–C115. S80 carries the phosphoserine modification.

The protein belongs to the cystatin family.

The protein localises to the secreted. Functionally, this protein binds tightly to and inhibits papain and cathepsin B. In Coturnix japonica (Japanese quail), this protein is Cystatin.